Reading from the N-terminus, the 227-residue chain is Potassium/proton antiporter CemA (227 aa).

4 consecutive transmembrane segments (helical) span residues 5-25 (SISL…SFTF), 112-132 (IICF…LILI), 143-163 (LSDT…IGFH), and 187-207 (IISG…KYWI).

Belongs to the CemA family.

The protein localises to the plastid. Its subcellular location is the chloroplast inner membrane. The enzyme catalyses K(+)(in) + H(+)(out) = K(+)(out) + H(+)(in). Its function is as follows. Contributes to K(+)/H(+) antiport activity by supporting proton efflux to control proton extrusion and homeostasis in chloroplasts in a light-dependent manner to modulate photosynthesis. Prevents excessive induction of non-photochemical quenching (NPQ) under continuous-light conditions. Indirectly promotes efficient inorganic carbon uptake into chloroplasts. The protein is Potassium/proton antiporter CemA of Phaseolus vulgaris (Kidney bean).